Reading from the N-terminus, the 196-residue chain is Probable thymidylate kinase (196 aa).

7-14 (GIDGSGKS) is a binding site for ATP.

It belongs to the thymidylate kinase family.

The catalysed reaction is dTMP + ATP = dTDP + ADP. This is Probable thymidylate kinase from Natronomonas pharaonis (strain ATCC 35678 / DSM 2160 / CIP 103997 / JCM 8858 / NBRC 14720 / NCIMB 2260 / Gabara) (Halobacterium pharaonis).